Here is a 410-residue protein sequence, read N- to C-terminus: Transcription factor SPN1 (410 aa).

A disordered region spans residues 1–132; it reads MSTADQEQPK…SRQELEEKLD (132 aa). Threonine 15 carries the post-translational modification Phosphothreonine. Polar residues predominate over residues 20 to 52; the sequence is TASSQKSTINAENENTKQNQSMEPQETSKGTSN. Serine 23 is subject to Phosphoserine; by ATM or ATR. At serine 40 the chain carries Phosphoserine. The segment covering 53 to 65 has biased composition (basic and acidic residues); it reads DTKDPDNGEKNEE. Residue serine 85 is modified to Phosphoserine. Position 86 is a phosphothreonine (threonine 86). At serine 89 the chain carries Phosphoserine. The TFIIS N-terminal domain occupies 219-296; it reads QSVRIWLEPL…AEWTRPIIGA (78 aa). Positions 318–346 are disordered; it reads KSVMDSAKNRKKKSKSGEDPTSRGSSVQT.

This sequence belongs to the IWS1 family. Interacts with ABD1, RBP1, SPT5 and SPT6.

The protein resides in the nucleus. Transcription factor involved in RNA polymerase II transcription regulation. May function in both SPT15/TBP post-recruitment and recruitment steps of transcription. The chain is Transcription factor SPN1 (SPN1) from Saccharomyces cerevisiae (strain ATCC 204508 / S288c) (Baker's yeast).